The chain runs to 226 residues: NAD(P)H-quinone oxidoreductase subunit K, chloroplastic (226 aa).

[4Fe-4S] cluster contacts are provided by Cys-43, Cys-44, Cys-108, and Cys-139.

The protein belongs to the complex I 20 kDa subunit family. As to quaternary structure, NDH is composed of at least 16 different subunits, 5 of which are encoded in the nucleus. The cofactor is [4Fe-4S] cluster.

The protein resides in the plastid. Its subcellular location is the chloroplast thylakoid membrane. It catalyses the reaction a plastoquinone + NADH + (n+1) H(+)(in) = a plastoquinol + NAD(+) + n H(+)(out). The catalysed reaction is a plastoquinone + NADPH + (n+1) H(+)(in) = a plastoquinol + NADP(+) + n H(+)(out). Its function is as follows. NDH shuttles electrons from NAD(P)H:plastoquinone, via FMN and iron-sulfur (Fe-S) centers, to quinones in the photosynthetic chain and possibly in a chloroplast respiratory chain. The immediate electron acceptor for the enzyme in this species is believed to be plastoquinone. Couples the redox reaction to proton translocation, and thus conserves the redox energy in a proton gradient. In Lupinus luteus (European yellow lupine), this protein is NAD(P)H-quinone oxidoreductase subunit K, chloroplastic.